We begin with the raw amino-acid sequence, 512 residues long: Glycerol kinase 1 (512 aa).

Residue Thr-18 coordinates ADP. 3 residues coordinate ATP: Thr-18, Thr-19, and Ser-20. Thr-18 lines the sn-glycerol 3-phosphate pocket. Position 22 (Arg-22) interacts with ADP. Positions 88, 89, 140, and 255 each coordinate sn-glycerol 3-phosphate. Residues Arg-88, Glu-89, Tyr-140, Asp-255, and Gln-256 each coordinate glycerol. Positions 277 and 321 each coordinate ADP. Residues Thr-277, Gly-321, Gln-325, and Gly-422 each coordinate ATP. 2 residues coordinate ADP: Gly-422 and Asn-426.

The protein belongs to the FGGY kinase family.

It catalyses the reaction glycerol + ATP = sn-glycerol 3-phosphate + ADP + H(+). It participates in polyol metabolism; glycerol degradation via glycerol kinase pathway; sn-glycerol 3-phosphate from glycerol: step 1/1. With respect to regulation, inhibited by fructose 1,6-bisphosphate (FBP). Functionally, key enzyme in the regulation of glycerol uptake and metabolism. Catalyzes the phosphorylation of glycerol to yield sn-glycerol 3-phosphate. The polypeptide is Glycerol kinase 1 (Streptomyces avermitilis (strain ATCC 31267 / DSM 46492 / JCM 5070 / NBRC 14893 / NCIMB 12804 / NRRL 8165 / MA-4680)).